The primary structure comprises 325 residues: Beta-ketoacyl-[acyl-carrier-protein] synthase III (325 aa).

Catalysis depends on residues cysteine 112 and histidine 250. Residues 251–255 form an ACP-binding region; that stretch reads QANIR. Asparagine 280 is an active-site residue.

Belongs to the thiolase-like superfamily. FabH family. As to quaternary structure, homodimer.

It is found in the cytoplasm. It carries out the reaction malonyl-[ACP] + acetyl-CoA + H(+) = 3-oxobutanoyl-[ACP] + CO2 + CoA. The protein operates within lipid metabolism; fatty acid biosynthesis. In terms of biological role, catalyzes the condensation reaction of fatty acid synthesis by the addition to an acyl acceptor of two carbons from malonyl-ACP. Catalyzes the first condensation reaction which initiates fatty acid synthesis and may therefore play a role in governing the total rate of fatty acid production. Possesses both acetoacetyl-ACP synthase and acetyl transacylase activities. Its substrate specificity determines the biosynthesis of branched-chain and/or straight-chain of fatty acids. In Clostridium acetobutylicum (strain ATCC 824 / DSM 792 / JCM 1419 / IAM 19013 / LMG 5710 / NBRC 13948 / NRRL B-527 / VKM B-1787 / 2291 / W), this protein is Beta-ketoacyl-[acyl-carrier-protein] synthase III.